Consider the following 386-residue polypeptide: N-acetylneuraminate epimerase (386 aa).

A signal peptide spans 1–29; sequence MGMQMKNFKKMMTLMALCFSVAITTSGYA. 7 Kelch repeats span residues 51-95, 97-149, 151-186, 187-232, 235-284, 306-355, and 357-386; these read VIYV…VFLN, ELYV…VKLN, TMVL…KVIY, NYFN…VMGN, LMLI…LAGA, QNYT…SYGD, and VFLI…LLIK. Glu-241 (proton acceptor) is an active-site residue.

It belongs to the NanM family. In terms of assembly, homodimer.

It is found in the periplasm. It catalyses the reaction N-acetyl-alpha-neuraminate = N-acetyl-beta-neuraminate. In terms of biological role, converts alpha-N-acetylneuranimic acid (Neu5Ac) to the beta-anomer, accelerating the equilibrium between the alpha- and beta-anomers. Probably facilitates sialidase-negative bacteria to compete successfully for limited amounts of extracellular Neu5Ac, which is likely taken up in the beta-anomer. In addition, the rapid removal of sialic acid from solution might be advantageous to the bacterium to damp down host responses. This Salmonella typhimurium (strain LT2 / SGSC1412 / ATCC 700720) protein is N-acetylneuraminate epimerase.